The following is an 803-amino-acid chain: Phenylalanine--tRNA ligase beta subunit (803 aa).

Residues 40-153 form the tRNA-binding domain; it reads ASLDRRIVVG…SSWEIGKPFA (114 aa). The 77-residue stretch at 400-476 folds into the B5 domain; it reads ADLQLLALRP…RLYGYNAIES (77 aa). Asp-454, Asp-460, Glu-463, and Glu-464 together coordinate Mg(2+). The 93-residue stretch at 709 to 801 folds into the FDX-ACB domain; that stretch reads SRFPVVERDI…AESKLGAVIR (93 aa).

The protein belongs to the phenylalanyl-tRNA synthetase beta subunit family. Type 1 subfamily. Tetramer of two alpha and two beta subunits. The cofactor is Mg(2+).

It localises to the cytoplasm. It carries out the reaction tRNA(Phe) + L-phenylalanine + ATP = L-phenylalanyl-tRNA(Phe) + AMP + diphosphate + H(+). This chain is Phenylalanine--tRNA ligase beta subunit, found in Chlorobium chlorochromatii (strain CaD3).